Reading from the N-terminus, the 526-residue chain is MAIHAAYIFIAATLIALYVARRMREQHARQKLARDQGCEPLTTAINKLPYGLDRKWQIVTHRGNILDDLITTRFAELGCYIYTDNQWGSPPIICAEPATMKAVLSTKFRDWDMDSNRYPALGPWLGRGVLVSSHQGKGSLWATARALLRPMFANTATYNHALIEPSVQEFLSILGHLNQAGAPDKDLLPFIRRLNVDIITTVFCGGSINEQQSGLAIAVGADAKHRKPVLEEAFDTIEPIAGLRLQTGSMYWLFTSKPFRDGCETFTGLADGWINRALSKRDEKPDLSQDEGAAAREKNFTEELVSSTDDRELLRDILVQLLFAGIDTSTSMLSFALVELGRHPSAWARLRAELAAHNMLSGGPETITAAQLKECAFLQNIIKETLRLYPPVPINSREAIRDTVLPSGGGADGSKPVFVPKGTSLKYSPYVMHRREDLYGPDALLWNPDRWIGRAPGWDYLPFNGGPRVCIGQKFALSSSAYVLARLAQQFDTCTALPTTGPIDSKLGAVLVPKAGVPVSLTNSTT.

The chain crosses the membrane as a helical span at residues 2-20; sequence AIHAAYIFIAATLIALYVA. Cys-470 is a heme binding site.

The protein belongs to the cytochrome P450 family. Heme is required as a cofactor.

It localises to the membrane. The enzyme catalyses cordypyrone A + reduced [NADPH--hemoprotein reductase] + O2 = cordypyrone B + oxidized [NADPH--hemoprotein reductase] + H2O + H(+). Its pathway is secondary metabolite biosynthesis. Cytochrome P450 monooxygenase; part of the gene cluster that mediates the biosynthesis of cordypyrones A and B, 2 pyrones that show modest activities against pathogenic bacteria including methicillin-resistant Staphylococcus aureus (MRSA), Mycobacterium tuberculosis and Bacillus cereus. The HR-PKS milA catalyzes the formation of cordypyrones A via condensation of one acetate with 10 malonate units. Since milA lacks an enoyl reductase domain, the 2 beta-keto processing domains DH and KR of milA collaborate with the trans-enoyl reductase milB to catalyze the different levels of reduction. The cytochrome P450 monooxygenase milC then hydroxylates the C-22 of cordypyrones A to yield cordypyrones B. In Cordyceps militaris (strain CM01) (Caterpillar fungus), this protein is Cytochrome P450 monooxygenase milC.